A 328-amino-acid chain; its full sequence is Stress response kinase A (328 aa).

The active-site Proton acceptor is the Asp-201. Mg(2+) is bound by residues Asn-206 and Asp-217. Asp-217 is a catalytic residue.

Belongs to the SrkA/RdoA protein kinase family. As to quaternary structure, monomer. The cofactor is Mg(2+).

Its subcellular location is the cytoplasm. It catalyses the reaction L-seryl-[protein] + ATP = O-phospho-L-seryl-[protein] + ADP + H(+). The catalysed reaction is L-threonyl-[protein] + ATP = O-phospho-L-threonyl-[protein] + ADP + H(+). Its function is as follows. A protein kinase that phosphorylates Ser and Thr residues. Probably acts to suppress the effects of stress linked to accumulation of reactive oxygen species. Probably involved in the extracytoplasmic stress response. Also has a role in LPS synthesis, through regulation of the galETK expression. A protein kinase that phosphorylates Ser and Thr residues. Probably acts to suppress the effects of stress linked to accumulation of reactive oxygen species. Probably involved in the extracytoplasmic stress response. The sequence is that of Stress response kinase A from Shigella flexneri.